The following is a 208-amino-acid chain: High frequency lysogenization protein HflD homolog (208 aa).

The protein belongs to the HflD family.

The protein resides in the cytoplasm. Its subcellular location is the cell inner membrane. This is High frequency lysogenization protein HflD homolog from Yersinia pestis bv. Antiqua (strain Nepal516).